Reading from the N-terminus, the 251-residue chain is 3-deoxy-manno-octulosonate cytidylyltransferase (251 aa).

This sequence belongs to the KdsB family.

The protein localises to the cytoplasm. The catalysed reaction is 3-deoxy-alpha-D-manno-oct-2-ulosonate + CTP = CMP-3-deoxy-beta-D-manno-octulosonate + diphosphate. Its pathway is nucleotide-sugar biosynthesis; CMP-3-deoxy-D-manno-octulosonate biosynthesis; CMP-3-deoxy-D-manno-octulosonate from 3-deoxy-D-manno-octulosonate and CTP: step 1/1. It participates in bacterial outer membrane biogenesis; lipopolysaccharide biosynthesis. Functionally, activates KDO (a required 8-carbon sugar) for incorporation into bacterial lipopolysaccharide in Gram-negative bacteria. The sequence is that of 3-deoxy-manno-octulosonate cytidylyltransferase from Brucella abortus (strain 2308).